The sequence spans 208 residues: MARYLGADCKLCRREKMKLFLKGSKCESPKCPIEERPYPPGEHGRTRAKESEYLLQLREKQKCARIYGVLEKQFRRYYEEASRKTGRTGENLLRILESRLDNVVYRAGFAASRDQARQLVRHGHFLVNGRRVDIPSYRVSENDVIEVAEKSRELTPFVIARAVAGERTVPPWLEVIPNRLRILVHSLPSRQVIDTPVQEQLIVEFYSK.

The 66-residue stretch at 98–163 (SRLDNVVYRA…LTPFVIARAV (66 aa)) folds into the S4 RNA-binding domain.

It belongs to the universal ribosomal protein uS4 family. As to quaternary structure, part of the 30S ribosomal subunit. Contacts protein S5. The interaction surface between S4 and S5 is involved in control of translational fidelity.

In terms of biological role, one of the primary rRNA binding proteins, it binds directly to 16S rRNA where it nucleates assembly of the body of the 30S subunit. With S5 and S12 plays an important role in translational accuracy. The polypeptide is Small ribosomal subunit protein uS4 (Acidothermus cellulolyticus (strain ATCC 43068 / DSM 8971 / 11B)).